Consider the following 1172-residue polypeptide: Thrombospondin-2 (1172 aa).

The signal sequence occupies residues 1 to 18; sequence MLWALALLALGIGPRASA. One can recognise a Laminin G-like domain in the interval 19 to 215; sequence GDHVKDTSFD…LQNVHLVFAD (197 aa). The segment at 19 to 232 is heparin-binding; the sequence is GDHVKDTSFD…KKGCQHSQGA (214 aa). N-linked (GlcNAc...) asparagine glycosylation is found at Asn-151, Asn-316, and Asn-330. The region spanning 318–375 is the VWFC domain; it reads SACVQEGRIFAENETWVVDSCTTCTCKKFKTVCHQITCSPATCANPSFVEGECCPSCS. TSP type-1 domains lie at 381–431, 437–492, and 494–549; these read DEGW…GKCD, NGGW…DPCP, and DGRW…RSCP. Disulfide bonds link Cys-393-Cys-425, Cys-397-Cys-430, Cys-408-Cys-415, Cys-449-Cys-486, Cys-453-Cys-491, Cys-464-Cys-476, Cys-506-Cys-543, Cys-510-Cys-548, Cys-521-Cys-533, Cys-553-Cys-564, Cys-558-Cys-574, Cys-577-Cys-588, Cys-594-Cys-610, Cys-601-Cys-619, Cys-622-Cys-646, Cys-652-Cys-665, Cys-659-Cys-678, Cys-680-Cys-691, Cys-707-Cys-715, Cys-720-Cys-740, Cys-756-Cys-776, Cys-779-Cys-799, Cys-815-Cys-835, Cys-838-Cys-858, Cys-876-Cys-896, Cys-912-Cys-932, and Cys-948-Cys-1169. An N-linked (GlcNAc...) asparagine glycan is attached at Asn-457. One can recognise an EGF-like 1 domain in the interval 549–589; it reads PIDGCLSNPCFPGAKCNSFPDGSWSCGSCPVGFLGNGTHCE. Asn-584 carries N-linked (GlcNAc...) asparagine glycosylation. The 45-residue stretch at 648 to 692 folds into the EGF-like 2 domain; the sequence is PENPCKDKTHSCHKNAECIYLGHFSDPMYKCECQIGYAGDGLICG. TSP type-3 repeat units follow at residues 693–728, 729–764, 765–787, 788–823, 824–846, 847–884, 885–920, and 921–956; these read EDSDLDGWPNNNLVCATNATYHCIKDNCPKLPNSGQ, EDFDKDGIGDACDEDDDNDGVSDEKDNCQLLFNPRQ, LDYDKDEVGDRCDNCPYVHNPAQ, IDTDNNGEGDACSVDIDGDDVFNERDNCPYVYNTDQ, RDTDGDGVGDHCDNCPLMHNPDQ, IDQDNDLVGDQCDNNEDIDDDGHQNNQDNCPYISNSNQ, ADHDNDGKGDACDSDDDNDGVPDDRDNCRLVFNPDQ, and EDSDGDGRGDICKDDFDNDNVPDIDDVCPENNAITE. Residue Asn-710 is glycosylated (N-linked (GlcNAc...) asparagine). The segment at 727-752 is disordered; the sequence is GQEDFDKDGIGDACDEDDDNDGVSDE. Residues 739 to 749 show a composition bias toward acidic residues; sequence ACDEDDDNDGV. Positions 846-938 are disordered; sequence QIDQDNDLVG…GDICKDDFDN (93 aa). A compositionally biased stretch (acidic residues) spans 847–866; that stretch reads IDQDNDLVGDQCDNNEDIDD. Positions 870–884 are enriched in polar residues; the sequence is QNNQDNCPYISNSNQ. Basic and acidic residues predominate over residues 885-895; it reads ADHDNDGKGDA. Over residues 896-905 the composition is skewed to acidic residues; sequence CDSDDDNDGV. Positions 925–935 are enriched in basic and acidic residues; sequence GDGRGDICKDD. The Cell attachment site motif lies at 928 to 930; it reads RGD. The region spanning 960–1172 is the TSP C-terminal domain; it reads RNFQMVPLDP…SDLKYECRDA (213 aa). Residue Asn-1069 is glycosylated (N-linked (GlcNAc...) asparagine).

The protein belongs to the thrombospondin family. Homotrimer; disulfide-linked. Can bind to fibrinogen, fibronectin, laminin and type V collagen. Interacts (via the TSP type I repeats) with CD36; the interaction conveys an antiangiogenic effect. Interacts (via the TSP type I repeats) with HRG; the interaction blocks the antiangiogenic effect of THBS2 with CD36. Can bind to fibrinogen, fibronectin, laminin.

Functionally, adhesive glycoprotein that mediates cell-to-cell and cell-to-matrix interactions. Ligand for CD36 mediating antiangiogenic properties. This is Thrombospondin-2 (Thbs2) from Mus musculus (Mouse).